The sequence spans 61 residues: Large ribosomal subunit protein bL28 (61 aa).

The protein belongs to the bacterial ribosomal protein bL28 family.

The sequence is that of Large ribosomal subunit protein bL28 from Lactobacillus gasseri (strain ATCC 33323 / DSM 20243 / BCRC 14619 / CIP 102991 / JCM 1131 / KCTC 3163 / NCIMB 11718 / NCTC 13722 / AM63).